Here is a 426-residue protein sequence, read N- to C-terminus: MNHSETLFEQAQKYIPGGVNSPVRAFRGVGGTPVFFKHAEGAYLYDEDDRRYIDFIGSWGPMILGHSDPRIKAALHAQVDLGVGYGAPTAIETEMAKKVCELVPSIELVRMVNSGTEATMSAIRLARGYTGRDKIVKFEGCYHGHVDSLLVKAGSGALTLGVPNSPGIPASLAEHTLTLTYNDIDEVRETFRQMGDQIAAIIVEPVAGNMNCIPPVPGFLEALREVCDEHGTVLIFDEVMTGFRVSLGGAQGFYGVKPDLTALGKVIGGGLPVGAFGGKREIMEHISPLGPVYQAGTLSGNPLAMTAGLTTLNAISEPGFHDRLTEKTNRVKDGFKAAADEAGIPLAVQSAGAMFGFFFTAEPSITRFDQVMACDVERFKAFFQGMLKEGVYLAPSAFEAGFTTAALSDEDIEFTLAAARKVMKTL.

Lysine 265 is subject to N6-(pyridoxal phosphate)lysine.

This sequence belongs to the class-III pyridoxal-phosphate-dependent aminotransferase family. HemL subfamily. As to quaternary structure, homodimer. The cofactor is pyridoxal 5'-phosphate.

It localises to the cytoplasm. The catalysed reaction is (S)-4-amino-5-oxopentanoate = 5-aminolevulinate. The protein operates within porphyrin-containing compound metabolism; protoporphyrin-IX biosynthesis; 5-aminolevulinate from L-glutamyl-tRNA(Glu): step 2/2. In Marinobacter nauticus (strain ATCC 700491 / DSM 11845 / VT8) (Marinobacter aquaeolei), this protein is Glutamate-1-semialdehyde 2,1-aminomutase.